We begin with the raw amino-acid sequence, 274 residues long: Large ribosomal subunit protein uL2cz/uL2cy (274 aa).

2 disordered regions span residues 1–24 (MAIH…QVKS) and 223–274 (MNPV…RRSK). The segment covering 7–24 (KTSTPSTRNGTVDSQVKS) has biased composition (polar residues).

It belongs to the universal ribosomal protein uL2 family. Part of the 50S ribosomal subunit.

The protein resides in the plastid. It localises to the chloroplast. This is Large ribosomal subunit protein uL2cz/uL2cy (rpl2-A) from Nicotiana sylvestris (Wood tobacco).